Reading from the N-terminus, the 310-residue chain is Acetyl-coenzyme A carboxylase carboxyl transferase subunit alpha (310 aa).

The 251-residue stretch at 36 to 286 (NLEKEITKTY…GEYILKQLDE (251 aa)) folds into the CoA carboxyltransferase C-terminal domain.

Belongs to the AccA family. Acetyl-CoA carboxylase is a heterohexamer composed of biotin carboxyl carrier protein (AccB), biotin carboxylase (AccC) and two subunits each of ACCase subunit alpha (AccA) and ACCase subunit beta (AccD).

The protein localises to the cytoplasm. It catalyses the reaction N(6)-carboxybiotinyl-L-lysyl-[protein] + acetyl-CoA = N(6)-biotinyl-L-lysyl-[protein] + malonyl-CoA. The protein operates within lipid metabolism; malonyl-CoA biosynthesis; malonyl-CoA from acetyl-CoA: step 1/1. Component of the acetyl coenzyme A carboxylase (ACC) complex. First, biotin carboxylase catalyzes the carboxylation of biotin on its carrier protein (BCCP) and then the CO(2) group is transferred by the carboxyltransferase to acetyl-CoA to form malonyl-CoA. This chain is Acetyl-coenzyme A carboxylase carboxyl transferase subunit alpha, found in Campylobacter fetus subsp. fetus (strain 82-40).